The following is a 338-amino-acid chain: Dehydrogenase/reductase SDR family member 7 (338 aa).

Positions 1-28 are cleaved as a signal peptide; that stretch reads MSWELLLWLLALCALILPLVQLLRFLRA. NAD(+)-binding residues include S60 and I62. S190 provides a ligand contact to substrate. NAD(+) contacts are provided by Y203, K207, and S239. Y203 (proton acceptor) is an active-site residue.

Belongs to the short-chain dehydrogenases/reductases (SDR) family.

It localises to the endoplasmic reticulum membrane. The enzyme catalyses all-trans-retinol + NADP(+) = all-trans-retinal + NADPH + H(+). It carries out the reaction 5alpha-androstane-3alpha,17beta-diol + NADP(+) = 17beta-hydroxy-5alpha-androstan-3-one + NADPH + H(+). Functionally, NADPH-dependent oxidoreductase which catalyzes the reduction of a variety of compounds bearing carbonyl groups including steroids, retinoids and xenobiotics. Catalyzes the reduction/inactivation of 5alpha-dihydrotestosterone to 3alpha-androstanediol, with a possible role in the modulation of androgen receptor function. Involved in the reduction of all-trans-retinal to all-trans-retinol. Converts cortisone to 20beta-dihydrocortisone in vitro, although the physiological relevance of this activity is questionable. Reduces exogenous compounds such as quinones (1,2-naphtoquinone, 9,10-phenantrenequinone and benzoquinone) and other xenobiotics (alpha-diketones) in vitro, suggesting a role in the biotransformation of xenobiotics with carbonyl group. A dehydrogenase activity has not been detected so far. May play a role as tumor suppressor. This chain is Dehydrogenase/reductase SDR family member 7, found in Mus musculus (Mouse).